The chain runs to 525 residues: Asparagine synthetase domain-containing protein YML096W (525 aa).

The For GATase activity role is filled by Cys-2. The region spanning 2-209 is the Glutamine amidotransferase type-2 domain; the sequence is CGILLHYCPN…LNSNQRSHLP (208 aa). The Asparagine synthetase domain occupies 210–523; the sequence is YEVTSEIDLN…GTDLLKENRN (314 aa). The tract at residues 503–525 is disordered; it reads SAKMTKDGNKHGTDLLKENRNCS. The segment covering 506-525 has biased composition (basic and acidic residues); it reads MTKDGNKHGTDLLKENRNCS.

The protein resides in the cytoplasm. The polypeptide is Asparagine synthetase domain-containing protein YML096W (Saccharomyces cerevisiae (strain ATCC 204508 / S288c) (Baker's yeast)).